A 70-amino-acid chain; its full sequence is Large ribosomal subunit protein bL31 (70 aa).

4 residues coordinate Zn(2+): cysteine 16, cysteine 18, cysteine 37, and cysteine 40.

The protein belongs to the bacterial ribosomal protein bL31 family. Type A subfamily. In terms of assembly, part of the 50S ribosomal subunit. Zn(2+) serves as cofactor.

Its function is as follows. Binds the 23S rRNA. This chain is Large ribosomal subunit protein bL31, found in Klebsiella pneumoniae (strain 342).